A 150-amino-acid polypeptide reads, in one-letter code: Macrodomain Ter protein (150 aa).

Belongs to the MatP family. Homodimer.

The protein localises to the cytoplasm. Its function is as follows. Required for spatial organization of the terminus region of the chromosome (Ter macrodomain) during the cell cycle. Prevents early segregation of duplicated Ter macrodomains during cell division. Binds specifically to matS, which is a 13 bp signature motif repeated within the Ter macrodomain. This chain is Macrodomain Ter protein, found in Escherichia coli O8 (strain IAI1).